Reading from the N-terminus, the 1042-residue chain is Isoleucine--tRNA ligase (1042 aa).

The 'HIGH' region signature appears at 59–69 (PFANGLPHYGH). The 'KMSKS' region motif lies at 619 to 623 (KMSKS). An ATP-binding site is contributed by lysine 622.

Belongs to the class-I aminoacyl-tRNA synthetase family. IleS type 2 subfamily. In terms of assembly, monomer. It depends on Zn(2+) as a cofactor.

It localises to the cytoplasm. It carries out the reaction tRNA(Ile) + L-isoleucine + ATP = L-isoleucyl-tRNA(Ile) + AMP + diphosphate. Its function is as follows. Catalyzes the attachment of isoleucine to tRNA(Ile). As IleRS can inadvertently accommodate and process structurally similar amino acids such as valine, to avoid such errors it has two additional distinct tRNA(Ile)-dependent editing activities. One activity is designated as 'pretransfer' editing and involves the hydrolysis of activated Val-AMP. The other activity is designated 'posttransfer' editing and involves deacylation of mischarged Val-tRNA(Ile). This Nocardia farcinica (strain IFM 10152) protein is Isoleucine--tRNA ligase.